The sequence spans 352 residues: Protein RecA (352 aa).

67–74 (GPESSGKT) lines the ATP pocket.

This sequence belongs to the RecA family.

The protein resides in the cytoplasm. Can catalyze the hydrolysis of ATP in the presence of single-stranded DNA, the ATP-dependent uptake of single-stranded DNA by duplex DNA, and the ATP-dependent hybridization of homologous single-stranded DNAs. It interacts with LexA causing its activation and leading to its autocatalytic cleavage. This chain is Protein RecA, found in Chlamydia trachomatis serovar A (strain ATCC VR-571B / DSM 19440 / HAR-13).